Consider the following 233-residue polypeptide: Octanoyltransferase (233 aa).

The 181-residue stretch at 34-214 (GQAPSTVLLL…EFSAREATLI (181 aa)) folds into the BPL/LPL catalytic domain. Substrate is bound by residues 72 to 79 (RGGKLTWH), 144 to 146 (AIG), and 157 to 159 (GFS). Cys175 serves as the catalytic Acyl-thioester intermediate.

Belongs to the LipB family.

It localises to the cytoplasm. The enzyme catalyses octanoyl-[ACP] + L-lysyl-[protein] = N(6)-octanoyl-L-lysyl-[protein] + holo-[ACP] + H(+). It functions in the pathway protein modification; protein lipoylation via endogenous pathway; protein N(6)-(lipoyl)lysine from octanoyl-[acyl-carrier-protein]: step 1/2. In terms of biological role, catalyzes the transfer of endogenously produced octanoic acid from octanoyl-acyl-carrier-protein onto the lipoyl domains of lipoate-dependent enzymes. Lipoyl-ACP can also act as a substrate although octanoyl-ACP is likely to be the physiological substrate. The sequence is that of Octanoyltransferase from Renibacterium salmoninarum (strain ATCC 33209 / DSM 20767 / JCM 11484 / NBRC 15589 / NCIMB 2235).